The following is a 128-amino-acid chain: Iron-sulfur cluster insertion protein ErpA (128 aa).

Iron-sulfur cluster-binding residues include Cys-56, Cys-120, and Cys-122.

It belongs to the HesB/IscA family. Homodimer. It depends on iron-sulfur cluster as a cofactor.

Its function is as follows. Required for insertion of 4Fe-4S clusters for at least IspG. This Xanthomonas oryzae pv. oryzae (strain MAFF 311018) protein is Iron-sulfur cluster insertion protein ErpA.